A 406-amino-acid chain; its full sequence is Putative sodium-coupled neutral amino acid transporter 11 (406 aa).

Residues 1-7 (MKQAGFP) lie on the Cytoplasmic side of the membrane. The helical transmembrane segment at 8–28 (LGILLLFWVSYVTDFSLVLLI) threads the bilayer. An N-linked (GlcNAc...) asparagine glycan is attached at asparagine 44. 6 helical membrane-spanning segments follow: residues 48-68 (GFPG…IAMI), 93-113 (VFIG…LPLS), 121-141 (LGKV…IVMA), 156-176 (AWVF…FAFI), 202-222 (MSIV…YLTF), and 241-263 (VTFG…CFVT). A glycan (N-linked (GlcNAc...) asparagine) is linked at asparagine 275. Transmembrane regions (helical) follow at residues 279-299 (VFHI…SLLI), 301-321 (CLGI…IFII), and 340-360 (IMSC…FVMA).

It belongs to the amino acid/polyamine transporter 2 family.

The protein resides in the membrane. Its function is as follows. Putative sodium-dependent amino acid/proton antiporter. In Homo sapiens (Human), this protein is Putative sodium-coupled neutral amino acid transporter 11 (SLC38A11).